The chain runs to 528 residues: Glutamate--cysteine ligase (528 aa).

It belongs to the glutamate--cysteine ligase type 1 family. Type 1 subfamily.

The catalysed reaction is L-cysteine + L-glutamate + ATP = gamma-L-glutamyl-L-cysteine + ADP + phosphate + H(+). It participates in sulfur metabolism; glutathione biosynthesis; glutathione from L-cysteine and L-glutamate: step 1/2. The protein is Glutamate--cysteine ligase of Janthinobacterium sp. (strain Marseille) (Minibacterium massiliensis).